A 440-amino-acid chain; its full sequence is Transposon Ty1-PR3 Gag polyprotein (440 aa).

Composition is skewed to polar residues over residues 1–23, 48–60, and 127–152; these read MESQ…SVTS, TKAN…TPAS, and QSQF…GNTF. 3 disordered regions span residues 1–93, 126–173, and 352–440; these read MESQ…MMTQ, PQSQ…RPPP, and GSRN…PGTY. Low complexity predominate over residues 153-165; it reads TDSSSADSDMTST. The interval 299–401 is RNA-binding; it reads NNGIHINNKV…NSKSKTARAH (103 aa). Positions 402–418 are enriched in low complexity; sequence NVSTSNNSPSTDNDSIS. Position 416 is a phosphoserine (S416). A compositionally biased stretch (polar residues) spans 419–428; sequence KSTTEPIQLN. Residues 429–440 are compositionally biased toward basic and acidic residues; it reads NKHDLHLRPGTY.

As to quaternary structure, homotrimer.

Its subcellular location is the cytoplasm. Capsid protein (CA) is the structural component of the virus-like particle (VLP), forming the shell that encapsulates the retrotransposons dimeric RNA genome. The particles are assembled from trimer-clustered units and there are holes in the capsid shells that allow for the diffusion of macromolecules. CA also has nucleocapsid-like chaperone activity, promoting primer tRNA(i)-Met annealing to the multipartite primer-binding site (PBS), dimerization of Ty1 RNA and initiation of reverse transcription. This chain is Transposon Ty1-PR3 Gag polyprotein (TY1A-PR3), found in Saccharomyces cerevisiae (strain ATCC 204508 / S288c) (Baker's yeast).